A 130-amino-acid chain; its full sequence is MANLDVSQNTSDIHFSVSAADKVAELIKEEDNSNLNLRVSITGGGCSGFQYGFSFDEQINDDDTIVIQQCSDGKSSVKLLVDSMSYQYLHDAEIDYIKGIQGEQFVIRNPNAKTTCGCGSSFSIGDEDDL.

Iron-sulfur cluster-binding residues include Cys-46, Cys-116, and Cys-118.

The protein belongs to the HesB/IscA family. As to quaternary structure, homodimer. The cofactor is iron-sulfur cluster.

Functionally, required for insertion of 4Fe-4S clusters for at least IspG. This is Iron-sulfur cluster insertion protein ErpA from Legionella pneumophila subsp. pneumophila (strain Philadelphia 1 / ATCC 33152 / DSM 7513).